We begin with the raw amino-acid sequence, 266 residues long: UPF0294 protein YafD (266 aa).

It belongs to the UPF0294 family.

The protein localises to the cytoplasm. The sequence is that of UPF0294 protein YafD from Salmonella typhi.